The primary structure comprises 469 residues: ATP sulfurylase 4, chloroplastic (469 aa).

The transit peptide at 1 to 51 (MASSAAAIVSGSPFRSSPLIHNHHASRYAPGSISVVSLPRQVSRRGLSVKS) directs the protein to the chloroplast.

This sequence belongs to the sulfate adenylyltransferase family. In terms of assembly, homotetramer. In terms of tissue distribution, expressed in roots and leaves.

Its subcellular location is the plastid. It localises to the chloroplast stroma. The enzyme catalyses sulfate + ATP + H(+) = adenosine 5'-phosphosulfate + diphosphate. It participates in sulfur metabolism; hydrogen sulfide biosynthesis; sulfite from sulfate: step 1/3. Its function is as follows. Sulfate adenylyltransferase. Catalyzes the first step of the sulfate assimilation pathway. This is ATP sulfurylase 4, chloroplastic (APS4) from Arabidopsis thaliana (Mouse-ear cress).